We begin with the raw amino-acid sequence, 253 residues long: Triosephosphate isomerase, cytosolic (253 aa).

Residues N10 and K12 each contribute to the substrate site. Residue H96 is the Electrophile of the active site. E166 serves as the catalytic Proton acceptor.

This sequence belongs to the triosephosphate isomerase family. Homodimer.

It is found in the cytoplasm. The enzyme catalyses D-glyceraldehyde 3-phosphate = dihydroxyacetone phosphate. The protein operates within carbohydrate biosynthesis; gluconeogenesis. Its pathway is carbohydrate degradation; glycolysis; D-glyceraldehyde 3-phosphate from glycerone phosphate: step 1/1. This is Triosephosphate isomerase, cytosolic (TPI) from Oryza sativa subsp. japonica (Rice).